A 223-amino-acid polypeptide reads, in one-letter code: Urease accessory protein UreF (223 aa).

The protein belongs to the UreF family. UreD, UreF and UreG form a complex that acts as a GTP-hydrolysis-dependent molecular chaperone, activating the urease apoprotein by helping to assemble the nickel containing metallocenter of UreC. The UreE protein probably delivers the nickel.

Its subcellular location is the cytoplasm. Its function is as follows. Required for maturation of urease via the functional incorporation of the urease nickel metallocenter. In Rhizobium leguminosarum bv. viciae, this protein is Urease accessory protein UreF.